The chain runs to 367 residues: Polygalacturonase (367 aa).

An N-terminal signal peptide occupies residues 1–19 (MSIRLIAVLSAASIAVTSA). A disulfide bond links cysteine 27 and cysteine 42. N-linked (GlcNAc...) asparagine glycosylation occurs at asparagine 185. Residues 187–208 (TDQLTIEDTVVKNQDDCIAVNQ) form a PbH1 1 repeat. Residue aspartate 201 is the Proton donor of the active site. Cysteine 203 and cysteine 219 are oxidised to a cystine. Histidine 223 is an active-site residue. The PbH1 2 repeat unit spans residues 240–261 (VRNVTFSNSVVRKSRNGIHIKT). N-linked (GlcNAc...) asparagine glycosylation is present at asparagine 242. Cysteine 334 and cysteine 339 form a disulfide bridge. N-linked (GlcNAc...) asparagine glycosylation is found at asparagine 343 and asparagine 357. A disulfide bond links cysteine 358 and cysteine 367.

Belongs to the glycosyl hydrolase 28 family. In terms of tissue distribution, expressed in larval carcasses and gut, and adult gut.

It localises to the secreted. The protein resides in the cell wall. It catalyses the reaction (1,4-alpha-D-galacturonosyl)n+m + H2O = (1,4-alpha-D-galacturonosyl)n + (1,4-alpha-D-galacturonosyl)m.. This chain is Polygalacturonase, found in Phaedon cochleariae (Mustard beetle).